Consider the following 212-residue polypeptide: Orotate phosphoribosyltransferase (212 aa).

Residues arginine 95, lysine 99, histidine 101, and 121 to 129 (DDLITTGGS) each bind 5-phospho-alpha-D-ribose 1-diphosphate. Threonine 125 provides a ligand contact to orotate.

This sequence belongs to the purine/pyrimidine phosphoribosyltransferase family. PyrE subfamily. In terms of assembly, homodimer. Requires Mg(2+) as cofactor.

It catalyses the reaction orotidine 5'-phosphate + diphosphate = orotate + 5-phospho-alpha-D-ribose 1-diphosphate. It functions in the pathway pyrimidine metabolism; UMP biosynthesis via de novo pathway; UMP from orotate: step 1/2. Functionally, catalyzes the transfer of a ribosyl phosphate group from 5-phosphoribose 1-diphosphate to orotate, leading to the formation of orotidine monophosphate (OMP). The protein is Orotate phosphoribosyltransferase of Lactobacillus johnsonii (strain CNCM I-12250 / La1 / NCC 533).